The following is a 685-amino-acid chain: N(6)-adenosine-methyltransferase MT-A70-like (685 aa).

S-adenosyl-L-methionine is bound by residues 464-465 (DI) and D482. The segment at 552–565 (RIIRTGRTGHWLNH) is positively charged region required for RNA-binding. S-adenosyl-L-methionine-binding positions include K599, 622 to 625 (RMHN), and 635 to 636 (NQ). The interval 657–685 (EIDVQPPSPPRASAMETDNEPMAIDSITA) is disordered. At S664 the chain carries Phosphoserine.

The protein belongs to the MT-A70-like family. Interacts with FIP37. Interacts with MTB. Associates with MTB, FIP37, VIR and HAKAI to form the m6A writer complex which is essential for adenosine methylation at specific mRNA sequences.

It localises to the nucleus. It carries out the reaction an adenosine in mRNA + S-adenosyl-L-methionine = an N(6)-methyladenosine in mRNA + S-adenosyl-L-homocysteine + H(+). Functionally, catalytic subunit of the N6-methyltransferase complex, a multiprotein complex that mediates N6-methyladenosine (m6A) methylation at the 5'-[AG]GAC-3' consensus sites of some mRNAs. Associates with MTB, FIP37, VIR and HAKAI to form the m6A writer complex which is essential for adenosine methylation at specific mRNA sequences. N6-methyladenosine (m6A) plays a role in mRNA stability, processing, translation efficiency and editing. The protein is N(6)-adenosine-methyltransferase MT-A70-like of Arabidopsis thaliana (Mouse-ear cress).